A 317-amino-acid chain; its full sequence is UV DNA damage endonuclease (317 aa).

The protein belongs to the uve1/UvsE family.

Its function is as follows. Component in a DNA repair pathway. Removal of UV LIGHT damaged nucleotides. Recognizes pyrimidine dimers and cleave a phosphodiester bond immediately 5' to the lesion. This Bacillus cereus (strain 03BB102) protein is UV DNA damage endonuclease.